The following is a 61-amino-acid chain: Small ribosomal subunit protein bS21 (61 aa).

This sequence belongs to the bacterial ribosomal protein bS21 family.

This Leuconostoc mesenteroides subsp. mesenteroides (strain ATCC 8293 / DSM 20343 / BCRC 11652 / CCM 1803 / JCM 6124 / NCDO 523 / NBRC 100496 / NCIMB 8023 / NCTC 12954 / NRRL B-1118 / 37Y) protein is Small ribosomal subunit protein bS21.